The chain runs to 336 residues: Cytosolic 5'-nucleotidase 3A (336 aa).

Asp-88 acts as the Nucleophile in catalysis. Residues Asp-88 and Asp-90 each coordinate Mg(2+). Residue Asp-90 is the Proton donor of the active site. Residue Glu-135 participates in CMP binding. 2 residues coordinate N(7)-methyl-GMP: Glu-135 and Ser-156. Substrate-binding positions include 203–204 and Lys-252; that span reads SA. Residue Asp-277 participates in Mg(2+) binding. Ser-278 carries the post-translational modification Phosphoserine.

It belongs to the pyrimidine 5'-nucleotidase family. In terms of assembly, monomer. Isoforms 1, 3 and 4 are expressed in reticulocytes. Isoform 4 is hardly detectable in bone marrow and fetal liver.

The protein localises to the cytoplasm. Its subcellular location is the endoplasmic reticulum. It catalyses the reaction N(7)-methyl-GMP + H2O = N(7)-methylguanosine + phosphate. It carries out the reaction CMP + H2O = cytidine + phosphate. The catalysed reaction is a ribonucleoside 5'-phosphate + H2O = a ribonucleoside + phosphate. In terms of biological role, nucleotidase which shows specific activity towards cytidine monophosphate (CMP) and 7-methylguanosine monophosphate (m(7)GMP). CMP seems to be the preferred substrate. In Homo sapiens (Human), this protein is Cytosolic 5'-nucleotidase 3A (NT5C3A).